Here is a 706-residue protein sequence, read N- to C-terminus: Probable protein S-acyltransferase 20 (706 aa).

The next 2 membrane-spanning stretches (helical) occupy residues 16–36 (VIAI…FAPF) and 41–61 (IWEY…FVLY). The region spanning 172–222 (LFCTLCNCEVRKFSKHCRSCDKCVDCFDHHCKWLNNCVGRKNYVTFVSLMS) is the DHHC domain. Residue cysteine 202 is the S-palmitoyl cysteine intermediate of the active site. The next 2 helical transmembrane spans lie at 220–240 (LMSA…AVIV) and 275–295 (AVAI…MLLI). Disordered regions lie at residues 470 to 505 (SSLS…HVHE), 591 to 621 (LNPS…ALRD), and 680 to 706 (RDST…SNIK). 3 stretches are compositionally biased toward polar residues: residues 492–501 (HGMSNLSSPS), 591–603 (LNPS…TQNP), and 697–706 (ANSQTGSNIK).

Belongs to the DHHC palmitoyltransferase family.

It localises to the cell membrane. It is found in the cytoplasmic vesicle membrane. It catalyses the reaction L-cysteinyl-[protein] + hexadecanoyl-CoA = S-hexadecanoyl-L-cysteinyl-[protein] + CoA. In terms of biological role, palmitoyl acyltransferase. The sequence is that of Probable protein S-acyltransferase 20 (PAT20) from Arabidopsis thaliana (Mouse-ear cress).